The chain runs to 261 residues: Enolase-phosphatase E1 (261 aa).

Mg(2+) contacts are provided by Asp16 and Glu18. Substrate contacts are provided by residues 153 to 154 (SS) and Lys187. Asp212 contributes to the Mg(2+) binding site.

This sequence belongs to the HAD-like hydrolase superfamily. MasA/MtnC family. Monomer. The cofactor is Mg(2+).

The protein resides in the cytoplasm. It localises to the nucleus. It carries out the reaction 5-methylsulfanyl-2,3-dioxopentyl phosphate + H2O = 1,2-dihydroxy-5-(methylsulfanyl)pent-1-en-3-one + phosphate. It functions in the pathway amino-acid biosynthesis; L-methionine biosynthesis via salvage pathway; L-methionine from S-methyl-5-thio-alpha-D-ribose 1-phosphate: step 3/6. It participates in amino-acid biosynthesis; L-methionine biosynthesis via salvage pathway; L-methionine from S-methyl-5-thio-alpha-D-ribose 1-phosphate: step 4/6. In terms of biological role, bifunctional enzyme that catalyzes the enolization of 2,3-diketo-5-methylthiopentyl-1-phosphate (DK-MTP-1-P) into the intermediate 2-hydroxy-3-keto-5-methylthiopentenyl-1-phosphate (HK-MTPenyl-1-P), which is then dephosphorylated to form the acireductone 1,2-dihydroxy-3-keto-5-methylthiopentene (DHK-MTPene). This is Enolase-phosphatase E1 (enoph1) from Danio rerio (Zebrafish).